We begin with the raw amino-acid sequence, 324 residues long: Quinolinate synthase 1 (324 aa).

Residues histidine 48 and serine 66 each contribute to the iminosuccinate site. Residue cysteine 111 participates in [4Fe-4S] cluster binding. Iminosuccinate is bound by residues 137–139 and serine 154; that span reads YVN. Cysteine 196 is a [4Fe-4S] cluster binding site. Iminosuccinate contacts are provided by residues 222 to 224 and threonine 239; that span reads HPE. Cysteine 282 provides a ligand contact to [4Fe-4S] cluster.

The protein belongs to the quinolinate synthase family. Type 2 subfamily. It depends on [4Fe-4S] cluster as a cofactor.

The protein localises to the cytoplasm. It catalyses the reaction iminosuccinate + dihydroxyacetone phosphate = quinolinate + phosphate + 2 H2O + H(+). Its pathway is cofactor biosynthesis; NAD(+) biosynthesis; quinolinate from iminoaspartate: step 1/1. In terms of biological role, catalyzes the condensation of iminoaspartate with dihydroxyacetone phosphate to form quinolinate. This is Quinolinate synthase 1 from Mesorhizobium japonicum (strain LMG 29417 / CECT 9101 / MAFF 303099) (Mesorhizobium loti (strain MAFF 303099)).